We begin with the raw amino-acid sequence, 815 residues long: RNA-binding protein 5 (815 aa).

Positions M1–D93 are disordered. A phosphoserine mark is found at S18, S59, S69, S72, and S78. Residues K98–P178 form the RRM 1 domain. The RanBP2-type zinc finger occupies K181–D210. Residues D231 to S315 form the RRM 2 domain. The required for interaction with U2AF2 stretch occupies residues V321–A809. The segment covering Q411–P422 has biased composition (polar residues). Disordered regions lie at residues Q411–S468 and P507–I540. Residues P426–T446 show a composition bias toward low complexity. Residue S444 is modified to Phosphoserine. Residues T452–K535 form a sufficient for interaction with ACIN1, PRPF8, SFRS3, SNRPB, SNRPN, SNRNP70 and SNRNP200 region. 2 positions are modified to phosphoserine: S621 and S624. The C2H2-type; atypical zinc finger occupies M647–D677. One can recognise a G-patch domain in the interval H743–S789.

It belongs to the RBM5/RBM10 family. In terms of assembly, component of the spliceosome A complex (also known as the prespliceosome). Appears to dissociate from the spliceosome upon formation of the spliceosome B complex (also known as the precatalytic spliceosome), in which the heterotrimeric U4/U6.U5 snRNPs are bound. Interacts with U2AF2; this interaction is direct. Also interacts with ACIN1, PRPF8, SFRS3, SNRPB, SNRPN, SNRNP70 and SNRNP200; these interactions may be indirect. In terms of tissue distribution, isoform 5 is widely expressed in normal tissues and is expressed at increased levels in T-leukemic cell lines.

It is found in the nucleus. Component of the spliceosome A complex. Binds to ssRNA containing the consensus sequence 5'-AGGUAA-3'. Regulates alternative splicing of a number of mRNAs. May modulate splice site pairing after recruitment of the U1 and U2 snRNPs to the 5' and 3' splice sites of the intron. May both positively and negatively regulate apoptosis by regulating the alternative splicing of several genes involved in this process, including FAS and CASP2/caspase-2. In the case of FAS, promotes exclusion of exon 6 thereby producing a soluble form of FAS that inhibits apoptosis. In the case of CASP2/caspase-2, promotes exclusion of exon 9 thereby producing a catalytically active form of CASP2/Caspase-2 that induces apoptosis. The protein is RNA-binding protein 5 (RBM5) of Homo sapiens (Human).